Consider the following 303-residue polypeptide: MRFKGLDLNLLVALDALMTERKLTAAARSINLSQPAMSAAISRLRDYFRDDLFIMQRRELVPTPRAEALAPAVREALLHIQLSVIAWDPINPAESDRRFRIILSDFMALVFFDKIILRLAREAPGVSFELLPLDDDPEELLRRGDVDFLILPDLFMSGAHPKARLFEERLVCVGCPTNEQLQGQLSLEQYMSMGHVAAKFGRGLKPSVEQWLLMQHGLKRRIELVVPGFNLIPPLLSGTNRIATIPLRLVKHYERTIPLRIIEHPLPLVSFTEAVQWPALHNTDPGNIWMREIMIQEALRIGI.

An HTH lysR-type domain is found at 6–63 (LDLNLLVALDALMTERKLTAAARSINLSQPAMSAAISRLRDYFRDDLFIMQRRELVPT). Residues 23-42 (LTAAARSINLSQPAMSAAIS) constitute a DNA-binding region (H-T-H motif).

This sequence belongs to the LysR transcriptional regulatory family.

NodD regulates the expression of the nodABCFE genes which encode other nodulation proteins. NodD is also a negative regulator of its own expression. Binds flavonoids as inducers. The polypeptide is Nodulation protein D (nodD) (Rhizobium leguminosarum bv. viciae).